Consider the following 397-residue polypeptide: 1-deoxy-D-xylulose 5-phosphate reductoisomerase (397 aa).

The NADPH site is built by Thr12, Gly13, Ser14, Ile15, Gly38, Lys39, Asn40, and Asn126. Lys127 provides a ligand contact to 1-deoxy-D-xylulose 5-phosphate. Glu128 provides a ligand contact to NADPH. Asp152 is a binding site for Mn(2+). 4 residues coordinate 1-deoxy-D-xylulose 5-phosphate: Ser153, Glu154, Ser188, and His211. Position 154 (Glu154) interacts with Mn(2+). Gly217 is an NADPH binding site. 4 residues coordinate 1-deoxy-D-xylulose 5-phosphate: Ser224, Asn229, Lys230, and Glu233. Residue Glu233 participates in Mn(2+) binding.

The protein belongs to the DXR family. Mg(2+) is required as a cofactor. The cofactor is Mn(2+).

The enzyme catalyses 2-C-methyl-D-erythritol 4-phosphate + NADP(+) = 1-deoxy-D-xylulose 5-phosphate + NADPH + H(+). It functions in the pathway isoprenoid biosynthesis; isopentenyl diphosphate biosynthesis via DXP pathway; isopentenyl diphosphate from 1-deoxy-D-xylulose 5-phosphate: step 1/6. Its function is as follows. Catalyzes the NADPH-dependent rearrangement and reduction of 1-deoxy-D-xylulose-5-phosphate (DXP) to 2-C-methyl-D-erythritol 4-phosphate (MEP). This Haemophilus influenzae (strain PittGG) protein is 1-deoxy-D-xylulose 5-phosphate reductoisomerase.